The sequence spans 333 residues: Pantothenate synthetase (333 aa).

An ATP-binding site is contributed by 27-34 (MGALHEGH). Histidine 34 acts as the Proton donor in catalysis. Glutamine 61 is a (R)-pantoate binding site. Glutamine 61 lines the beta-alanine pocket. 148 to 151 (GQKD) serves as a coordination point for ATP. Residue glutamine 154 coordinates (R)-pantoate. Residues valine 177 and 185 to 188 (LSSR) contribute to the ATP site.

This sequence belongs to the pantothenate synthetase family. Homodimer.

The protein localises to the cytoplasm. The enzyme catalyses (R)-pantoate + beta-alanine + ATP = (R)-pantothenate + AMP + diphosphate + H(+). Its pathway is cofactor biosynthesis; (R)-pantothenate biosynthesis; (R)-pantothenate from (R)-pantoate and beta-alanine: step 1/1. Its function is as follows. Catalyzes the condensation of pantoate with beta-alanine in an ATP-dependent reaction via a pantoyl-adenylate intermediate. This chain is Pantothenate synthetase, found in Streptomyces avermitilis (strain ATCC 31267 / DSM 46492 / JCM 5070 / NBRC 14893 / NCIMB 12804 / NRRL 8165 / MA-4680).